The following is a 20-amino-acid chain: Phospholipase A2 II-5b (20 aa).

This sequence belongs to the phospholipase A2 family. Group I subfamily. It depends on Ca(2+) as a cofactor. Expressed by the venom gland.

It is found in the secreted. It carries out the reaction a 1,2-diacyl-sn-glycero-3-phosphocholine + H2O = a 1-acyl-sn-glycero-3-phosphocholine + a fatty acid + H(+). In terms of biological role, snake venom phospholipase A2 (PLA2) that exhibits weak enzymatic activity. PLA2 catalyzes the calcium-dependent hydrolysis of the 2-acyl groups in 3-sn-phosphoglycerides. This chain is Phospholipase A2 II-5b, found in Notechis scutatus scutatus (Mainland tiger snake).